Consider the following 142-residue polypeptide: Small ribosomal subunit protein uS12 (142 aa).

The interval 1 to 44 is disordered; that stretch reads MANGKYAARKLKKDRQKHRWSDTDYARRERGLGKKSDPLEGAPQ. Basic residues predominate over residues 7-18; it reads AARKLKKDRQKH. Basic and acidic residues predominate over residues 19–38; it reads RWSDTDYARRERGLGKKSDP.

It belongs to the universal ribosomal protein uS12 family. As to quaternary structure, part of the 30S ribosomal subunit.

Functionally, with S4 and S5 plays an important role in translational accuracy. Located at the interface of the 30S and 50S subunits. This Haloarcula marismortui (strain ATCC 43049 / DSM 3752 / JCM 8966 / VKM B-1809) (Halobacterium marismortui) protein is Small ribosomal subunit protein uS12.